Here is a 390-residue protein sequence, read N- to C-terminus: Succinate--CoA ligase [ADP-forming] subunit beta (390 aa).

One can recognise an ATP-grasp domain in the interval 9–244 (KEILKRYGVN…ETQTDTSENE (236 aa)). Residues Lys46, 53-55 (GRG), Glu99, Leu102, and Glu107 each bind ATP. Positions 199 and 213 each coordinate Mg(2+). Substrate contacts are provided by residues Asn264 and 321 to 323 (GIV).

It belongs to the succinate/malate CoA ligase beta subunit family. In terms of assembly, heterotetramer of two alpha and two beta subunits. Mg(2+) serves as cofactor.

The catalysed reaction is succinate + ATP + CoA = succinyl-CoA + ADP + phosphate. It catalyses the reaction GTP + succinate + CoA = succinyl-CoA + GDP + phosphate. The protein operates within carbohydrate metabolism; tricarboxylic acid cycle; succinate from succinyl-CoA (ligase route): step 1/1. Functionally, succinyl-CoA synthetase functions in the citric acid cycle (TCA), coupling the hydrolysis of succinyl-CoA to the synthesis of either ATP or GTP and thus represents the only step of substrate-level phosphorylation in the TCA. The beta subunit provides nucleotide specificity of the enzyme and binds the substrate succinate, while the binding sites for coenzyme A and phosphate are found in the alpha subunit. This Campylobacter curvus (strain 525.92) protein is Succinate--CoA ligase [ADP-forming] subunit beta.